A 453-amino-acid chain; its full sequence is Trigger factor (453 aa).

In terms of domain architecture, PPIase FKBP-type spans 171–256 (GDRVTISFKG…ASLIEAPQDI (86 aa)).

It belongs to the FKBP-type PPIase family. Tig subfamily.

The protein resides in the cytoplasm. The catalysed reaction is [protein]-peptidylproline (omega=180) = [protein]-peptidylproline (omega=0). In terms of biological role, involved in protein export. Acts as a chaperone by maintaining the newly synthesized protein in an open conformation. Functions as a peptidyl-prolyl cis-trans isomerase. This Nitrobacter hamburgensis (strain DSM 10229 / NCIMB 13809 / X14) protein is Trigger factor.